The following is a 421-amino-acid chain: D-amino acid dehydrogenase (421 aa).

Val-3–Tyr-17 provides a ligand contact to FAD.

Belongs to the DadA oxidoreductase family. It depends on FAD as a cofactor.

It catalyses the reaction a D-alpha-amino acid + A + H2O = a 2-oxocarboxylate + AH2 + NH4(+). The protein operates within amino-acid degradation; D-alanine degradation; NH(3) and pyruvate from D-alanine: step 1/1. In terms of biological role, oxidative deamination of D-amino acids. In Acinetobacter baumannii (strain SDF), this protein is D-amino acid dehydrogenase.